The sequence spans 485 residues: GlcNAc-binding protein A (485 aa).

A signal peptide spans 1–23 (MKKQPKMTAIALILSGISGLAYG). A Chitin-binding type-4 domain is found at 24–201 (HGYVSAVENG…SFYNVIDVKF (178 aa)). The Chitin-binding type-3 domain occupies 437 to 478 (AGTKVLASDGAIYQCKPWPYSGYCQQWTSNATQYQPGTGSHW).

This sequence belongs to the GbpA family.

It localises to the secreted. In terms of biological role, probably interacts with GlcNAc residues. May promote attachment to both epithelial cell surfaces and chitin. The sequence is that of GlcNAc-binding protein A from Vibrio cholerae serotype O1 (strain M66-2).